The sequence spans 1276 residues: Probable outer membrane protein pmp6 (1276 aa).

A signal peptide spans 1-23; the sequence is MKYSLPWLLTSSALVFSLHPLMA. One can recognise an Autotransporter domain in the interval 981–1276; sequence DAPSHPGIWI…NANCGTRYSF (296 aa).

This sequence belongs to the PMP outer membrane protein family.

The protein resides in the secreted. The protein localises to the cell wall. It localises to the cell outer membrane. The protein is Probable outer membrane protein pmp6 (pmp6) of Chlamydia pneumoniae (Chlamydophila pneumoniae).